We begin with the raw amino-acid sequence, 1516 residues long: Mediator of RNA polymerase II transcription subunit 14 (1516 aa).

Disordered regions lie at residues 22–98 (LSSQ…EVPA) and 1434–1516 (MHRQ…YPPQ). Low complexity predominate over residues 34–47 (SPAAPISPAPSGSA). Positions 72-83 (SEVDVKSIHSSD) are enriched in basic and acidic residues. A compositionally biased stretch (low complexity) spans 1463 to 1473 (SHQQHMMNPGS). Residues 1474–1483 (VGPGSVGGPG) are compositionally biased toward gly residues. Residues 1502 to 1516 (QSYHHPLHHQQYPPQ) show a composition bias toward low complexity.

This sequence belongs to the Mediator complex subunit 14 family. Component of the Mediator complex.

It is found in the nucleus. Component of the Mediator complex, a coactivator involved in the regulated transcription of nearly all RNA polymerase II-dependent genes. Mediator functions as a bridge to convey information from gene-specific regulatory proteins to the basal RNA polymerase II transcription machinery. Mediator is recruited to promoters by direct interactions with regulatory proteins and serves as a scaffold for the assembly of a functional preinitiation complex with RNA polymerase II and the general transcription factors. Required for transcription in the embryo and for phosphorylation of the RNA polymerase II C-terminal domain repeat. The protein is Mediator of RNA polymerase II transcription subunit 14 (rgr-1) of Caenorhabditis elegans.